Here is a 102-residue protein sequence, read N- to C-terminus: Small ribosomal subunit protein uS10 (102 aa).

Belongs to the universal ribosomal protein uS10 family. In terms of assembly, part of the 30S ribosomal subunit.

In terms of biological role, involved in the binding of tRNA to the ribosomes. This is Small ribosomal subunit protein uS10 from Mycoplasma mobile (strain ATCC 43663 / 163K / NCTC 11711) (Mesomycoplasma mobile).